An 84-amino-acid polypeptide reads, in one-letter code: Polcalcin Nic t 1 (84 aa).

EF-hand domains lie at Gln6 to Ser40 and Val41 to Leu76. Residues Asp19, Asn21, Asp23, Lys25, Glu30, Asp54, Asp56, Asp58, and Glu65 each contribute to the Ca(2+) site.

This chain is Polcalcin Nic t 1 (Nict1), found in Nicotiana tabacum (Common tobacco).